Consider the following 232-residue polypeptide: Dehydrin DHN2 (232 aa).

A compositionally biased stretch (polar residues) spans 1 to 12; it reads MSQYQNQYGAQT. Disordered regions lie at residues 1–92, 131–156, and 173–232; these read MSQY…STNT, PGTE…SGGG, and PGDK…CTGH. Gly residues predominate over residues 73–82; the sequence is THTGGVGGYG. The span at 131 to 140 shows a compositional bias: basic and acidic residues; sequence PGTEQSRTHT. The segment covering 143–156 has biased composition (gly residues); that stretch reads TGYGSTGYGASGGG. The span at 200 to 223 shows a compositional bias: basic and acidic residues; it reads YVREEHRVDHGEKKGIMDKIKEKL.

The protein belongs to the plant dehydrin family.

This Pisum sativum (Garden pea) protein is Dehydrin DHN2 (DHN2).